The chain runs to 538 residues: Thermosome subunit beta (538 aa).

Residues Ser518–Met538 form a disordered region. Residues Glu528–Met538 show a composition bias toward gly residues.

It belongs to the TCP-1 chaperonin family. As to quaternary structure, forms a Heterooligomeric complex of two stacked eight-membered rings.

Its function is as follows. Molecular chaperone; binds unfolded polypeptides in vitro, and has a weak ATPase activity. The polypeptide is Thermosome subunit beta (thsB) (Methanothermobacter thermautotrophicus (strain ATCC 29096 / DSM 1053 / JCM 10044 / NBRC 100330 / Delta H) (Methanobacterium thermoautotrophicum)).